We begin with the raw amino-acid sequence, 246 residues long: Bis(5'-nucleosyl)-tetraphosphatase PrpE [asymmetrical] (246 aa).

It belongs to the PrpE family. Ni(2+) is required as a cofactor.

The enzyme catalyses P(1),P(4)-bis(5'-guanosyl) tetraphosphate + H2O = GMP + GTP + 2 H(+). Its function is as follows. Asymmetrically hydrolyzes Ap4p to yield AMP and ATP. This chain is Bis(5'-nucleosyl)-tetraphosphatase PrpE [asymmetrical], found in Bacillus cereus (strain ZK / E33L).